The primary structure comprises 256 residues: NifU-like protein, mitochondrial (256 aa).

Positions Cys196 to Cys199 match the CxxC motif motif.

It belongs to the NifU family. In terms of assembly, homodimer; in absence of BOL3, probably bridged by an iron-sulfure cluster. Interacts with BOL3. Interacts with apo-target proteins, such as ACO1, LYS4, ACO2 and SDH2.

The protein resides in the mitochondrion matrix. In terms of biological role, involved in iron homeostasis within the mitochondrion where it is involved in the assembly of iron-sulfur proteins. Together with BOL3, required during the last step of iron-sulfur protein assembly when the iron-sulfur cluster is inserted into the target protein. Required for protecting iron sulfur clusters from oxidative damage. The chain is NifU-like protein, mitochondrial (NFU1) from Saccharomyces cerevisiae (strain ATCC 204508 / S288c) (Baker's yeast).